The primary structure comprises 188 residues: Cell division protein SepF (188 aa).

A disordered region spans residues 29 to 53 (EQQDQDQRATQADGGALATLGDSNP).

It belongs to the SepF family. In terms of assembly, homodimer. Interacts with FtsZ.

The protein resides in the cytoplasm. Cell division protein that is part of the divisome complex and is recruited early to the Z-ring. Probably stimulates Z-ring formation, perhaps through the cross-linking of FtsZ protofilaments. Its function overlaps with FtsA. In Synechococcus sp. (strain CC9902), this protein is Cell division protein SepF.